Consider the following 109-residue polypeptide: Large ribosomal subunit protein uL24 (109 aa).

This sequence belongs to the universal ribosomal protein uL24 family. In terms of assembly, part of the 50S ribosomal subunit.

Its function is as follows. One of two assembly initiator proteins, it binds directly to the 5'-end of the 23S rRNA, where it nucleates assembly of the 50S subunit. In terms of biological role, one of the proteins that surrounds the polypeptide exit tunnel on the outside of the subunit. In Geotalea uraniireducens (strain Rf4) (Geobacter uraniireducens), this protein is Large ribosomal subunit protein uL24.